An 84-amino-acid chain; its full sequence is Kappa-conotoxin-like Im11.3 (84 aa).

A signal peptide spans 1-26 (MMFRLTSVSCFLLVIACLNLFQVVLT). 4 disulfide bridges follow: Cys-29/Cys-43, Cys-36/Cys-48, Cys-42/Cys-51, and Cys-47/Cys-64. Residues 71 to 84 (LRPSHPLFLLLPAR) constitute a propeptide that is removed on maturation.

The protein belongs to the conotoxin I2 superfamily. In terms of tissue distribution, expressed by the venom duct.

The protein resides in the secreted. In terms of biological role, inhibits the vertebrate voltage-gated potassium channels Kv1.1/KCNA1 and Kv1.3/KCNA3. The sequence is that of Kappa-conotoxin-like Im11.3 from Conus imperialis (Imperial cone).